A 111-amino-acid chain; its full sequence is MIGGNTTIISGAINASTEAPGLGTGGRAWPVLVGVVLGAVVLSILIALAAKCHLCRRYHASYRHRPLSSAGGGNRPPVGEDEDDDGFIEDNYIQPGAGEMETTGSRDHFSL.

Residues 1 to 27 lie on the Extracellular side of the membrane; the sequence is MIGGNTTIISGAINASTEAPGLGTGGR. The N-linked (GlcNAc...) asparagine glycan is linked to Asn5. Residues 28-48 traverse the membrane as a helical; Signal-anchor for type III membrane protein segment; it reads AWPVLVGVVLGAVVLSILIAL. The Cytoplasmic portion of the chain corresponds to 49–111; that stretch reads AAKCHLCRRY…TTGSRDHFSL (63 aa). The tract at residues 64–111 is disordered; the sequence is HRPLSSAGGGNRPPVGEDEDDDGFIEDNYIQPGAGEMETTGSRDHFSL. Residues 79–88 are compositionally biased toward acidic residues; that stretch reads GEDEDDDGFI.

Expressed in stomach, kidney, large and small intestine and kidney.

It localises to the membrane. Its subcellular location is the early endosome. The protein resides in the recycling endosome. It is found in the cell membrane. May be involved in membrane trafficking between endosomes and plasma membrane. The polypeptide is Type III endosome membrane protein TEMP (Mus musculus (Mouse)).